We begin with the raw amino-acid sequence, 904 residues long: NADH-quinone oxidoreductase subunit G (904 aa).

The region spanning 1–83 (MATIHVDGKA…GTWISIDDEE (83 aa)) is the 2Fe-2S ferredoxin-type domain. Cys-34, Cys-45, Cys-48, and Cys-67 together coordinate [2Fe-2S] cluster. Residues 83–122 (ESKAFRASVVEWLMTNHPHDCPVCEEGGHCHLQDMTVMTG) form the 4Fe-4S His(Cys)3-ligated-type domain. Residues His-99, Cys-103, Cys-106, Cys-112, Cys-151, Cys-154, Cys-157, Cys-201, Cys-228, Cys-231, Cys-235, and Cys-263 each contribute to the [4Fe-4S] cluster site. The 4Fe-4S Mo/W bis-MGD-type domain maps to 221-277 (MQFAPSICHGCSSGCNISPGERYGELRRIENRFNGSVNQYFLCDRGRFGYGYVNRKD).

Belongs to the complex I 75 kDa subunit family. In terms of assembly, composed of 13 different subunits. Subunits NuoCD, E, F, and G constitute the peripheral sector of the complex. [2Fe-2S] cluster is required as a cofactor. Requires [4Fe-4S] cluster as cofactor.

The enzyme catalyses a quinone + NADH + 5 H(+)(in) = a quinol + NAD(+) + 4 H(+)(out). Its function is as follows. NDH-1 shuttles electrons from NADH, via FMN and iron-sulfur (Fe-S) centers, to quinones in the respiratory chain. The immediate electron acceptor for the enzyme in this species is believed to be ubiquinone. Couples the redox reaction to proton translocation (for every two electrons transferred, four hydrogen ions are translocated across the cytoplasmic membrane), and thus conserves the redox energy in a proton gradient. The polypeptide is NADH-quinone oxidoreductase subunit G (nuoG) (Pseudomonas putida (strain ATCC 47054 / DSM 6125 / CFBP 8728 / NCIMB 11950 / KT2440)).